Reading from the N-terminus, the 428-residue chain is Serine--tRNA ligase (428 aa).

231–233 (TAE) is a binding site for L-serine. Residues 262 to 264 (RRE) and Val278 each bind ATP. Glu285 contacts L-serine. 349–352 (EVSS) is an ATP binding site. L-serine is bound at residue Ser384.

This sequence belongs to the class-II aminoacyl-tRNA synthetase family. Type-1 seryl-tRNA synthetase subfamily. As to quaternary structure, homodimer. The tRNA molecule binds across the dimer.

The protein resides in the cytoplasm. It carries out the reaction tRNA(Ser) + L-serine + ATP = L-seryl-tRNA(Ser) + AMP + diphosphate + H(+). It catalyses the reaction tRNA(Sec) + L-serine + ATP = L-seryl-tRNA(Sec) + AMP + diphosphate + H(+). Its pathway is aminoacyl-tRNA biosynthesis; selenocysteinyl-tRNA(Sec) biosynthesis; L-seryl-tRNA(Sec) from L-serine and tRNA(Sec): step 1/1. Catalyzes the attachment of serine to tRNA(Ser). Is also able to aminoacylate tRNA(Sec) with serine, to form the misacylated tRNA L-seryl-tRNA(Sec), which will be further converted into selenocysteinyl-tRNA(Sec). In Chlamydia trachomatis serovar L2 (strain ATCC VR-902B / DSM 19102 / 434/Bu), this protein is Serine--tRNA ligase.